The primary structure comprises 481 residues: Chromosomal replication initiator protein DnaA (481 aa).

Positions 1 to 71 are domain I, interacts with DnaA modulators; it reads MTDLSAFWPQ…ETFAEDILGR (71 aa). Residues 71-143 form a domain II region; that stretch reads RPVTIELRIG…PAIGGGHEST (73 aa). A compositionally biased stretch (low complexity) spans 86-96; sequence ASAPAAASPRS. A disordered region spans residues 86-110; it reads ASAPAAASPRSPGRPAPAPVAATPT. Residues 144–361 are domain III, AAA+ region; sequence RLNPAFTFES…GALKRVVAYS (218 aa). Residues glycine 189, glycine 191, lysine 192, and threonine 193 each contribute to the ATP site. Residues 362–481 form a domain IV, binds dsDNA region; the sequence is RFSNQPISLD…YAALQQMLRN (120 aa).

The protein belongs to the DnaA family. In terms of assembly, oligomerizes as a right-handed, spiral filament on DNA at oriC.

The protein localises to the cytoplasm. Functionally, plays an essential role in the initiation and regulation of chromosomal replication. ATP-DnaA binds to the origin of replication (oriC) to initiate formation of the DNA replication initiation complex once per cell cycle. Binds the DnaA box (a 9 base pair repeat at the origin) and separates the double-stranded (ds)DNA. Forms a right-handed helical filament on oriC DNA; dsDNA binds to the exterior of the filament while single-stranded (ss)DNA is stabiized in the filament's interior. The ATP-DnaA-oriC complex binds and stabilizes one strand of the AT-rich DNA unwinding element (DUE), permitting loading of DNA polymerase. After initiation quickly degrades to an ADP-DnaA complex that is not apt for DNA replication. Binds acidic phospholipids. The protein is Chromosomal replication initiator protein DnaA of Laribacter hongkongensis (strain HLHK9).